Reading from the N-terminus, the 195-residue chain is UPF0215 protein TGAM_0348 (195 aa).

It belongs to the UPF0215 family.

In Thermococcus gammatolerans (strain DSM 15229 / JCM 11827 / EJ3), this protein is UPF0215 protein TGAM_0348.